We begin with the raw amino-acid sequence, 509 residues long: Histidine ammonia-lyase (509 aa).

The segment at residues 144 to 146 (ASG) is a cross-link (5-imidazolinone (Ala-Gly)). S145 is subject to 2,3-didehydroalanine (Ser).

It belongs to the PAL/histidase family. Contains an active site 4-methylidene-imidazol-5-one (MIO), which is formed autocatalytically by cyclization and dehydration of residues Ala-Ser-Gly.

It localises to the cytoplasm. The enzyme catalyses L-histidine = trans-urocanate + NH4(+). Its pathway is amino-acid degradation; L-histidine degradation into L-glutamate; N-formimidoyl-L-glutamate from L-histidine: step 1/3. The chain is Histidine ammonia-lyase from Pseudoalteromonas atlantica (strain T6c / ATCC BAA-1087).